A 310-amino-acid chain; its full sequence is MAKIVVALGGNALGKSPQEQLELVKNTAKSLVGLITKGHEIVISHGNGPQVGSINLGLNYAAEHNQGPAFPFAECGAMSQAYIGYQLQESLQNELHSIGMNKQVVTLVTQVEVDENDPAFNNPSKPIGLFYNKEEAEQIQKEKGFIFVEDAGRGYRRVVPSPQPISIIELESIKTLIKNDTLVIAAGGGGIPVIREQHDGFKGIDAVIDKDKTSALLGANIQCDQLIILTAIDYVYINFNTENQQPLKTTNVDELKRYIDENQFAKGSMLPKIEAAISFIENNPKGSVLITSLNELDAALEGKVGTVIKK.

This sequence belongs to the carbamate kinase family.

The protein resides in the cytoplasm. It carries out the reaction hydrogencarbonate + NH4(+) + ATP = carbamoyl phosphate + ADP + H2O + H(+). The protein operates within metabolic intermediate metabolism; carbamoyl phosphate degradation; CO(2) and NH(3) from carbamoyl phosphate: step 1/1. This chain is Carbamate kinase 1 (arcC1), found in Staphylococcus aureus (strain bovine RF122 / ET3-1).